Reading from the N-terminus, the 554-residue chain is 2-succinyl-5-enolpyruvyl-6-hydroxy-3-cyclohexene-1-carboxylate synthase (554 aa).

The protein belongs to the TPP enzyme family. MenD subfamily. In terms of assembly, homodimer. Mg(2+) is required as a cofactor. The cofactor is Mn(2+). It depends on thiamine diphosphate as a cofactor.

The catalysed reaction is isochorismate + 2-oxoglutarate + H(+) = 5-enolpyruvoyl-6-hydroxy-2-succinyl-cyclohex-3-ene-1-carboxylate + CO2. It participates in quinol/quinone metabolism; 1,4-dihydroxy-2-naphthoate biosynthesis; 1,4-dihydroxy-2-naphthoate from chorismate: step 2/7. Its pathway is quinol/quinone metabolism; menaquinone biosynthesis. Its function is as follows. Catalyzes the thiamine diphosphate-dependent decarboxylation of 2-oxoglutarate and the subsequent addition of the resulting succinic semialdehyde-thiamine pyrophosphate anion to isochorismate to yield 2-succinyl-5-enolpyruvyl-6-hydroxy-3-cyclohexene-1-carboxylate (SEPHCHC). This Lactococcus lactis subsp. cremoris (strain SK11) protein is 2-succinyl-5-enolpyruvyl-6-hydroxy-3-cyclohexene-1-carboxylate synthase.